The chain runs to 42 residues: Photosystem II reaction center protein J (42 aa).

Residues I10–F30 form a helical membrane-spanning segment.

It belongs to the PsbJ family. PSII is composed of 1 copy each of membrane proteins PsbA, PsbB, PsbC, PsbD, PsbE, PsbF, PsbH, PsbI, PsbJ, PsbK, PsbL, PsbM, PsbT, PsbX, PsbY, PsbZ, Psb30/Ycf12, at least 3 peripheral proteins of the oxygen-evolving complex and a large number of cofactors. It forms dimeric complexes.

The protein resides in the plastid. The protein localises to the chloroplast thylakoid membrane. Its function is as follows. One of the components of the core complex of photosystem II (PSII). PSII is a light-driven water:plastoquinone oxidoreductase that uses light energy to abstract electrons from H(2)O, generating O(2) and a proton gradient subsequently used for ATP formation. It consists of a core antenna complex that captures photons, and an electron transfer chain that converts photonic excitation into a charge separation. The polypeptide is Photosystem II reaction center protein J (Chaetosphaeridium globosum (Charophycean green alga)).